Here is a 236-residue protein sequence, read N- to C-terminus: CD81 antigen (236 aa).

Topologically, residues 1–12 (MGVEGCTKCIKY) are cytoplasmic. The chain crosses the membrane as a helical span at residues 13–33 (LLFVFNFVFWLAGGVILGVAL). Residues 34 to 63 (WLRHDPQTTTLLYLELGDKPAPSTFYVGIY) lie on the Extracellular side of the membrane. The helical transmembrane segment at 64–84 (ILIAVGAVMMFVGFLGCYGAI) threads the bilayer. Topologically, residues 85 to 89 (QESQC) are cytoplasmic. Residues 90 to 112 (LLGTFFTCLVILFACEVAAGIWG) form a helical membrane-spanning segment. Topologically, residues 113-201 (FVNKDQIAKD…QKIDELFSGK (89 aa)) are extracellular. 2 disulfides stabilise this stretch: cysteine 156-cysteine 190 and cysteine 157-cysteine 175. Residues 202–224 (LYLIGIAAIVVAVIMIFEMILSM) form a helical membrane-spanning segment. Residue glutamate 219 coordinates cholesterol. Over 225 to 236 (VLCCGIRNSSVY) the chain is Cytoplasmic.

Belongs to the tetraspanin (TM4SF) family. Homodimer. Part of a complex composed of CD19, CR2/CD21, CD81 and IFITM1/CD225 in the membrane of mature B cells. Interacts (via the second extracellular domain) with CD19; this interaction is initiated early during biosynthesis in the ER and enables trafficking of only properly folded CD19. Part of a complex that includes MHC class II/HLA-DR molecules and IFITM1. Interacts with IFITM1. Interacts with IFITM2 and IFITM3. Part of integrin-tetraspanin complex composed of CD9, CD81, beta-1 and beta-2 integrins in the membrane of monocyte/macrophages. Interacts (via the second extracellular domain) with integrin ITGAV:ITGB3. Interacts with CD247/CD3 zeta, ICAM1 and CD9 at the immune synapse on T cell membrane. Part of a GPCR-tetraspanin complex consisting at least of ADGRG1, CD81, possibly CD9, and GNA11 in which CD81 enhances the association of ADGRG1 with GNA11. Part of a complex composed of CD9, CD81, PTGFRN and IGSF8. Interacts directly with IGSF8. Interacts with CD53 and SCIMP. Interacts with SAMHD1 (via its C-terminus). Interacts with glypican GPC3 and with the transcriptional repressor HHEX; binding to GPC3 decreases the availability of free CD81 for binding to HHEX, resulting in nuclear translocation of HHEX and transcriptional repression. Interacts with CLDN1. Interacts with CLDN6 and CLDN9. In terms of processing, not glycosylated. Post-translationally, likely constitutively palmitoylated at low levels. Protein palmitoylation is up-regulated upon coligation of BCR and CD9-C2R-CD81 complexes in lipid rafts.

The protein resides in the cell membrane. Its subcellular location is the basolateral cell membrane. In terms of biological role, structural component of specialized membrane microdomains known as tetraspanin-enriched microdomains (TERMs), which act as platforms for receptor clustering and signaling. Essential for trafficking and compartmentalization of CD19 receptor on the surface of activated B cells. Upon initial encounter with microbial pathogens, enables the assembly of CD19-CR2/CD21 and B cell receptor (BCR) complexes at signaling TERMs, lowering the threshold dose of antigen required to trigger B cell clonal expansion and antibody production. In T cells, facilitates the localization of CD247/CD3 zeta at antigen-induced synapses with B cells, providing for costimulation and polarization toward T helper type 2 phenotype. Present in MHC class II compartments, may also play a role in antigen presentation. Can act both as positive and negative regulator of homotypic or heterotypic cell-cell fusion processes. Positively regulates sperm-egg fusion and may be involved in acrosome reaction. In myoblasts, associates with CD9 and PTGFRN and inhibits myotube fusion during muscle regeneration. In macrophages, associates with CD9 and beta-1 and beta-2 integrins, and prevents macrophage fusion into multinucleated giant cells specialized in ingesting complement-opsonized large particles. Also prevents the fusion of mononuclear cell progenitors into osteoclasts in charge of bone resorption. May regulate the compartmentalization of enzymatic activities. In T cells, defines the subcellular localization of dNTPase SAMHD1 and permits its degradation by the proteasome, thereby controlling intracellular dNTP levels. Also involved in cell adhesion and motility. Positively regulates integrin-mediated adhesion of macrophages, particularly relevant for the inflammatory response in the lung. The chain is CD81 antigen (Cd81) from Rattus norvegicus (Rat).